The primary structure comprises 316 residues: Phosphoglycerate mutase-like protein AT74 (316 aa).

H17 (tele-phosphohistidine intermediate) is an active-site residue. E106 serves as the catalytic Proton donor/acceptor. A disordered region spans residues 275–316; the sequence is KECETEATEDREEEEEEEGKRVNLLTSSEYSNEPELYNGQCC. Residues 279-291 show a composition bias toward acidic residues; that stretch reads TEATEDREEEEEE.

It belongs to the phosphoglycerate mutase family. In terms of tissue distribution, expressed in roots, leaves, stems, flowers and siliques.

Functionally, phosphoglycerate mutase-like protein lacking PGM activity. May play a role in carbohydrates metabolism. The chain is Phosphoglycerate mutase-like protein AT74 from Arabidopsis thaliana (Mouse-ear cress).